Reading from the N-terminus, the 607-residue chain is Fatty acid amide hydrolase (607 aa).

Catalysis depends on charge relay system residues Lys204 and Ser280. Position 301–304 (301–304 (GGGS)) interacts with substrate. The active-site Acyl-ester intermediate is Ser304.

This sequence belongs to the amidase family. As to quaternary structure, forms homodimers.

Its subcellular location is the endoplasmic reticulum membrane. The protein localises to the cell membrane. The enzyme catalyses N-(9Z,12Z-octadecadienoyl)-ethanolamine + H2O = ethanolamine + (9Z,12Z)-octadecadienoate. Functionally, catalyzes the hydrolysis of bioactive endogenous fatty acid amides to their corresponding acids. The hydrolysis of endogenous amidated lipids terminates their participation as lipid mediators in various signaling systems. Converts a wide range of N-acylethanolamines (NAEs) to their corresponding free fatty acids and ethanolamine. The polypeptide is Fatty acid amide hydrolase (Medicago truncatula (Barrel medic)).